The chain runs to 99 residues: Large ribosomal subunit protein uL23 (99 aa).

This sequence belongs to the universal ribosomal protein uL23 family. In terms of assembly, part of the 50S ribosomal subunit. Contacts protein L29, and trigger factor when it is bound to the ribosome.

Functionally, one of the early assembly proteins it binds 23S rRNA. One of the proteins that surrounds the polypeptide exit tunnel on the outside of the ribosome. Forms the main docking site for trigger factor binding to the ribosome. The polypeptide is Large ribosomal subunit protein uL23 (Psychromonas ingrahamii (strain DSM 17664 / CCUG 51855 / 37)).